A 313-amino-acid chain; its full sequence is UPF0761 membrane protein VV1_0885 (313 aa).

The next 6 membrane-spanning stretches (helical) occupy residues 41–61 (YLAY…LSIL), 104–124 (MTAV…SNID), 139–159 (AVFS…LVGA), 185–205 (LLRW…YLLV), 215–235 (AVVG…GFAA), and 249–269 (ALAA…IVLI). A disordered region spans residues 294-313 (PNNDTELEKDTQRDRFDSES). The span at 299 to 313 (ELEKDTQRDRFDSES) shows a compositional bias: basic and acidic residues.

The protein belongs to the UPF0761 family.

Its subcellular location is the cell inner membrane. The polypeptide is UPF0761 membrane protein VV1_0885 (Vibrio vulnificus (strain CMCP6)).